We begin with the raw amino-acid sequence, 158 residues long: Crossover junction endodeoxyribonuclease RuvC (158 aa).

Active-site residues include D7, E66, and D139. D7, E66, and D139 together coordinate Mg(2+).

It belongs to the RuvC family. As to quaternary structure, homodimer which binds Holliday junction (HJ) DNA. The HJ becomes 2-fold symmetrical on binding to RuvC with unstacked arms; it has a different conformation from HJ DNA in complex with RuvA. In the full resolvosome a probable DNA-RuvA(4)-RuvB(12)-RuvC(2) complex forms which resolves the HJ. Requires Mg(2+) as cofactor.

It localises to the cytoplasm. The catalysed reaction is Endonucleolytic cleavage at a junction such as a reciprocal single-stranded crossover between two homologous DNA duplexes (Holliday junction).. Its function is as follows. The RuvA-RuvB-RuvC complex processes Holliday junction (HJ) DNA during genetic recombination and DNA repair. Endonuclease that resolves HJ intermediates. Cleaves cruciform DNA by making single-stranded nicks across the HJ at symmetrical positions within the homologous arms, yielding a 5'-phosphate and a 3'-hydroxyl group; requires a central core of homology in the junction. The consensus cleavage sequence is 5'-(A/T)TT(C/G)-3'. Cleavage occurs on the 3'-side of the TT dinucleotide at the point of strand exchange. HJ branch migration catalyzed by RuvA-RuvB allows RuvC to scan DNA until it finds its consensus sequence, where it cleaves and resolves the cruciform DNA. The chain is Crossover junction endodeoxyribonuclease RuvC from Campylobacter lari (strain RM2100 / D67 / ATCC BAA-1060).